The chain runs to 691 residues: Calcium-binding and coiled-coil domain-containing protein 1 (691 aa).

The segment at 1 to 30 is p300 KIX-binding; the sequence is MEESPLSRAPSRGGVNFLNVARTYIPNTKV. An N-terminal AD (CTNNB1 binding site) region spans residues 1-190; sequence MEESPLSRAP…VQELERALAT (190 aa). Phosphoserine is present on S4. The tract at residues 45 to 125 is interaction with GATA1; that stretch reads SDWIGIFKVE…FQFREPRPMD (81 aa). Coiled coils occupy residues 145–205, 232–339, and 417–514; these read KATV…YKGI, ELED…AELE, and QSVE…ADEK. Positions 501–691 are C-terminal AD (CTNNB1 binding site); interaction with CCAR1; it reads RKLEARLEKV…FSTQDPFTFE (191 aa). Residues 514–606 form a disordered region; it reads KWNEDATTED…SEAEDEKSVL (93 aa). The UBZ1-type zinc finger occupies 653 to 679; that stretch reads WKECPICKERFPAESDKDALEDHMDGH. Positions 656, 659, 675, and 679 each coordinate Zn(2+).

It belongs to the CALCOCO family. In terms of assembly, part of a calphoglin complex consisting of CALCOCO1, PPA1 and PGM. Interacts with the bHLH-PAS domains of GRIP1, AHR and ARNT. Interacts with CTNNB1 via both its N- and C-terminal regions. Interacts with EP300. Interacts with CCAR1 (via N-terminus) and GATA1.

It localises to the cytoplasm. It is found in the nucleus. In terms of biological role, functions as a coactivator for aryl hydrocarbon and nuclear receptors (NR). Recruited to promoters through its contact with the N-terminal basic helix-loop-helix-Per-Arnt-Sim (PAS) domain of transcription factors or coactivators, such as NCOA2. During ER-activation acts synergistically in combination with other NCOA2-binding proteins, such as EP300, CREBBP and CARM1. Involved in the transcriptional activation of target genes in the Wnt/CTNNB1 pathway. Functions as a secondary coactivator in LEF1-mediated transcriptional activation via its interaction with CTNNB1. Coactivator function for nuclear receptors and LEF1/CTNNB1 involves differential utilization of two different activation regions. In association with CCAR1 enhances GATA1- and MED1-mediated transcriptional activation from the gamma-globin promoter during erythroid differentiation of K562 erythroleukemia cells. Its function is as follows. Seems to enhance inorganic pyrophosphatase thus activating phosphogluomutase (PMG). Probably functions as a component of the calphoglin complex, which is involved in linking cellular metabolism (phosphate and glucose metabolism) with other core functions including protein synthesis and degradation, calcium signaling and cell growth. The protein is Calcium-binding and coiled-coil domain-containing protein 1 (CALCOCO1) of Homo sapiens (Human).